We begin with the raw amino-acid sequence, 298 residues long: Aspartate carbamoyltransferase catalytic subunit (298 aa).

Carbamoyl phosphate contacts are provided by arginine 50 and threonine 51. Position 79 (lysine 79) interacts with L-aspartate. Carbamoyl phosphate contacts are provided by arginine 100, histidine 128, and glutamine 131. 2 residues coordinate L-aspartate: arginine 161 and arginine 220. Residues leucine 259 and proline 260 each coordinate carbamoyl phosphate.

It belongs to the aspartate/ornithine carbamoyltransferase superfamily. ATCase family. Heterooligomer of catalytic and regulatory chains.

The enzyme catalyses carbamoyl phosphate + L-aspartate = N-carbamoyl-L-aspartate + phosphate + H(+). It functions in the pathway pyrimidine metabolism; UMP biosynthesis via de novo pathway; (S)-dihydroorotate from bicarbonate: step 2/3. Its function is as follows. Catalyzes the condensation of carbamoyl phosphate and aspartate to form carbamoyl aspartate and inorganic phosphate, the committed step in the de novo pyrimidine nucleotide biosynthesis pathway. The chain is Aspartate carbamoyltransferase catalytic subunit from Sulfurisphaera tokodaii (strain DSM 16993 / JCM 10545 / NBRC 100140 / 7) (Sulfolobus tokodaii).